The following is a 541-amino-acid chain: Chaperonin GroEL 2 (541 aa).

ATP contacts are provided by residues 29–32, 86–90, G413, 476–478, and D492; these read TLGP, DGTTT, and NAA.

This sequence belongs to the chaperonin (HSP60) family. In terms of assembly, forms a cylinder of 14 subunits composed of two heptameric rings stacked back-to-back. Interacts with the co-chaperonin GroES.

Its subcellular location is the secreted. The protein resides in the capsule. It localises to the cell surface. The protein localises to the cell wall. It catalyses the reaction ATP + H2O + a folded polypeptide = ADP + phosphate + an unfolded polypeptide.. Its function is as follows. Together with its co-chaperonin GroES, plays an essential role in assisting protein folding. The GroEL-GroES system forms a nano-cage that allows encapsulation of the non-native substrate proteins and provides a physical environment optimized to promote and accelerate protein folding. The polypeptide is Chaperonin GroEL 2 (Mycobacterium leprae (strain TN)).